The primary structure comprises 129 residues: UPF0325 protein HCH_00487 (129 aa).

Belongs to the UPF0325 family.

This chain is UPF0325 protein HCH_00487, found in Hahella chejuensis (strain KCTC 2396).